The following is a 78-amino-acid chain: D-alanyl carrier protein (78 aa).

The Carrier domain occupies 1–78; sequence MDVENTVVEI…KIIAKAKELQ (78 aa). Ser-36 carries the O-(pantetheine 4'-phosphoryl)serine modification.

The protein belongs to the DltC family. Post-translationally, 4'-phosphopantetheine is transferred from CoA to a specific serine of apo-DCP.

Its subcellular location is the cytoplasm. It participates in cell wall biogenesis; lipoteichoic acid biosynthesis. Its function is as follows. Carrier protein involved in the D-alanylation of lipoteichoic acid (LTA). The loading of thioester-linked D-alanine onto DltC is catalyzed by D-alanine--D-alanyl carrier protein ligase DltA. The DltC-carried D-alanyl group is further transferred to cell membrane phosphatidylglycerol (PG) by forming an ester bond, probably catalyzed by DltD. D-alanylation of LTA plays an important role in modulating the properties of the cell wall in Gram-positive bacteria, influencing the net charge of the cell wall. The chain is D-alanyl carrier protein from Latilactobacillus sakei subsp. sakei (strain 23K) (Lactobacillus sakei subsp. sakei).